Reading from the N-terminus, the 238-residue chain is Purine nucleoside phosphorylase DeoD-type (238 aa).

H5 contacts a purine D-ribonucleoside. Phosphate-binding positions include G21, R25, R44, and 88–91; that span reads RVGS. A purine D-ribonucleoside-binding positions include 180–182 and 204–205; these read EME and SD. D205 acts as the Proton donor in catalysis.

Belongs to the PNP/UDP phosphorylase family. As to quaternary structure, homohexamer; trimer of homodimers.

The catalysed reaction is a purine D-ribonucleoside + phosphate = a purine nucleobase + alpha-D-ribose 1-phosphate. It catalyses the reaction a purine 2'-deoxy-D-ribonucleoside + phosphate = a purine nucleobase + 2-deoxy-alpha-D-ribose 1-phosphate. Functionally, catalyzes the reversible phosphorolytic breakdown of the N-glycosidic bond in the beta-(deoxy)ribonucleoside molecules, with the formation of the corresponding free purine bases and pentose-1-phosphate. This is Purine nucleoside phosphorylase DeoD-type from Photorhabdus laumondii subsp. laumondii (strain DSM 15139 / CIP 105565 / TT01) (Photorhabdus luminescens subsp. laumondii).